A 380-amino-acid polypeptide reads, in one-letter code: Protein-tyrosine sulfotransferase A (380 aa).

The Cytoplasmic portion of the chain corresponds to 1–6 (MRKNRE). Residues 7–27 (LLLVLFLVVFILFYFITARTA) form a helical; Signal-anchor for type II membrane protein membrane-spanning segment. The Lumenal portion of the chain corresponds to 28 to 380 (DDPYYSNHRE…PIVDNEVSKL (353 aa)). An N-linked (GlcNAc...) asparagine glycan is attached at asparagine 66. 3'-phosphoadenylyl sulfate is bound at residue 79 to 83 (RSGTT). A disulfide bond links cysteine 97 and cysteine 157. Glutamate 100 (proton donor/acceptor) is an active-site residue. The segment at 102 to 106 (RVIPR) is interaction with peptide substrate. 3'-phosphoadenylyl sulfate contacts are provided by arginine 184, serine 192, and arginine 196. A disulfide bridge connects residues cysteine 226 and cysteine 234. 3'-phosphoadenylyl sulfate contacts are provided by residues tyrosine 239, 284-293 (SSDQVVKPVN), and lysine 299.

Belongs to the protein sulfotransferase family.

It is found in the golgi apparatus membrane. The catalysed reaction is L-tyrosyl-[protein] + 3'-phosphoadenylyl sulfate = O-sulfo-L-tyrosine-[protein] + adenosine 3',5'-bisphosphate + H(+). Catalyzes the O-sulfation of tyrosine residues within acidic motifs of polypeptides, using 3'-phosphoadenylyl sulfate (PAPS) as cosubstrate. The sequence is that of Protein-tyrosine sulfotransferase A (tpst-1) from Caenorhabditis elegans.